A 327-amino-acid polypeptide reads, in one-letter code: Mitochondrial thiamine pyrophosphate carrier 1 (327 aa).

Solcar repeat units follow at residues 13–114 (GSKL…AAQL), 126–214 (PAAA…LRAP), and 222–317 (FWGG…VLRA). The next 6 helical transmembrane spans lie at 16–36 (LQVV…IAPL), 95–111 (LLYI…YRSA), 132–152 (FVAG…LDLL), 189–209 (GIGP…AAYE), 223–245 (WGGQ…VFPL), and 292–309 (GLTV…VTMW).

The protein belongs to the mitochondrial carrier (TC 2.A.29) family.

The protein resides in the mitochondrion inner membrane. Mitochondrial transporter that mediates uptake of thiamine pyrophosphate (ThPP) into mitochondria. This Pyricularia oryzae (strain 70-15 / ATCC MYA-4617 / FGSC 8958) (Rice blast fungus) protein is Mitochondrial thiamine pyrophosphate carrier 1 (TPC1).